Here is a 277-residue protein sequence, read N- to C-terminus: Multiple sugar-binding transport system permease protein MsmG (277 aa).

The next 6 membrane-spanning stretches (helical) occupy residues 13 to 33, 74 to 94, 110 to 130, 141 to 161, 198 to 218, and 243 to 263; these read YVLL…TVFS, VITV…AYSI, LLIL…TVMM, LIIL…VGYI, TTLI…LLIL, and GPSF…YLIF. The 195-residue stretch at 69–263 folds into the ABC transmembrane type-1 domain; that stretch reads FWNSTVITVL…ITITIVYLIF (195 aa).

Belongs to the binding-protein-dependent transport system permease family. MalFG subfamily.

It localises to the cell membrane. Functionally, involved in a binding protein-dependent transport system responsible for the uptake of melibiose, raffinose and isomaltotriose. This Streptococcus mutans serotype c (strain ATCC 700610 / UA159) protein is Multiple sugar-binding transport system permease protein MsmG (msmG).